A 390-amino-acid polypeptide reads, in one-letter code: Chorismate synthase 1 (390 aa).

Residues arginine 39 and arginine 45 each coordinate NADP(+). A disordered region spans residues 95 to 117 (EQEEKEMKRKVTKPRPGHADLNG). Residues 132-134 (RSS), 253-254 (NA), glycine 298, 313-317 (KPIPT), and arginine 339 each bind FMN.

The protein belongs to the chorismate synthase family. Homotetramer. The cofactor is FMNH2.

The enzyme catalyses 5-O-(1-carboxyvinyl)-3-phosphoshikimate = chorismate + phosphate. It participates in metabolic intermediate biosynthesis; chorismate biosynthesis; chorismate from D-erythrose 4-phosphate and phosphoenolpyruvate: step 7/7. Its function is as follows. Catalyzes the anti-1,4-elimination of the C-3 phosphate and the C-6 proR hydrogen from 5-enolpyruvylshikimate-3-phosphate (EPSP) to yield chorismate, which is the branch point compound that serves as the starting substrate for the three terminal pathways of aromatic amino acid biosynthesis. This reaction introduces a second double bond into the aromatic ring system. This chain is Chorismate synthase 1, found in Bacillus cereus (strain ZK / E33L).